A 320-amino-acid chain; its full sequence is MAKTVSIPSVTLGSTGITMPLVGFGTVEYPLCEWFKDAVLHAIKLGYRHFDTASTYPSEQPLGEAITEALRLGLIKSRDELFITSKLWLTDSFPDRVIPALKKSLKNMGLEYLDCYLIHFPVCLIPEATYPVKKEDIRPMDFEGVWAAMEECQKLGLTKTIGVSNFTAKKLERILATAKILPAVNQVEMNPVWQQKKLRQFCEEKGIHFSAFSPLGAVGTDWGHNRVMECEVLKEIAKAKGKSLAQIAIRWVYQQGVSVITKSFNKQRMEENLDIFDWKLTPEELHKIDQIPQYRGSRGETFVSENGPYKTLEEMWDGEI.

Aspartate 51 is an NADP(+) binding site. Residue tyrosine 56 is the Proton donor of the active site. NADP(+) is bound by residues glutamine 186 and 264–272 (FNKQRMEEN).

This sequence belongs to the aldo/keto reductase family. As to expression, mainly expressed in petioles and, to a lower extent, in roots.

The enzyme catalyses 7-acetyl-epi-neemfruitin B + AH2 + H2O = (1S,3bR,4R,5aR,9aR,9bR,11aS)-1-[(4R)-5-[(2S)-3,3-dimethyloxiran-2-yl]-1,4-dihydroxybutan-2-yl]-3b,6,6,9a,11a-pentamethyl-7-oxo-1H,2H,3bH,4H,5H,5aH,6H,7H,9aH,9bH,10H,11H,11aH-cyclopenta[a]phenanthren-4-yl acetate + acetate + A + H(+). Its pathway is secondary metabolite biosynthesis; terpenoid biosynthesis. Functionally, aldo-keto reductase involved in the biosynthesis of limonoids triterpene natural products such as azadirachtin, an antifeedant widely used as bioinsecticide, and possessing many medicinal applications including anti-tumoral, anti-malarial, anti-rheumatic, antibacterial, anti-inflammatory, anti-pyretic and diuretic effects. Can use 7-acetyl-epi-neemfruitin B as substrate. The sequence is that of 7-acetyl-epi-neemfruitin B aldo-keto reductase from Melia azedarach (Chinaberry tree).